Consider the following 213-residue polypeptide: Pyridoxine/pyridoxamine 5'-phosphate oxidase (213 aa).

Substrate-binding positions include 8–11 (RKNY) and Lys66. FMN is bound by residues 61–66 (RIVLIK), 76–77 (FT), Arg82, Lys83, and Gln105. Substrate-binding residues include Tyr123, Arg127, and Ser131. Residues 140 to 141 (QS) and Trp184 each bind FMN. 190 to 192 (RLH) lines the substrate pocket. An FMN-binding site is contributed by Arg194.

Belongs to the pyridoxamine 5'-phosphate oxidase family. Homodimer. Requires FMN as cofactor.

It carries out the reaction pyridoxamine 5'-phosphate + O2 + H2O = pyridoxal 5'-phosphate + H2O2 + NH4(+). The enzyme catalyses pyridoxine 5'-phosphate + O2 = pyridoxal 5'-phosphate + H2O2. It participates in cofactor metabolism; pyridoxal 5'-phosphate salvage; pyridoxal 5'-phosphate from pyridoxamine 5'-phosphate: step 1/1. It functions in the pathway cofactor metabolism; pyridoxal 5'-phosphate salvage; pyridoxal 5'-phosphate from pyridoxine 5'-phosphate: step 1/1. Functionally, catalyzes the oxidation of either pyridoxine 5'-phosphate (PNP) or pyridoxamine 5'-phosphate (PMP) into pyridoxal 5'-phosphate (PLP). This is Pyridoxine/pyridoxamine 5'-phosphate oxidase from Paraburkholderia phytofirmans (strain DSM 17436 / LMG 22146 / PsJN) (Burkholderia phytofirmans).